Consider the following 106-residue polypeptide: NADH dehydrogenase [ubiquinone] iron-sulfur protein 5 (106 aa).

The 45-residue stretch at 30–74 (AGRCHAFEKEWIECAHGIGYTRAEKECKIEYDDFVECLLRQKTMR) folds into the CHCH domain. Short sequence motifs (cx9C motif) lie at residues 33-43 (CHAFEKEWIEC) and 56-66 (CKIEYDDFVEC). Disulfide bonds link Cys33–Cys66 and Cys43–Cys56. Residues 84 to 106 (DKLIKEGKYTPPPHHIGKGEPRP) are disordered.

This sequence belongs to the complex I NDUFS5 subunit family. In terms of assembly, mammalian complex I is composed of 45 different subunits. This is a component of the iron-sulfur (IP) fragment of the enzyme.

The protein resides in the mitochondrion inner membrane. Its subcellular location is the mitochondrion intermembrane space. Accessory subunit of the mitochondrial membrane respiratory chain NADH dehydrogenase (Complex I), that is believed not to be involved in catalysis. Complex I functions in the transfer of electrons from NADH to the respiratory chain. The immediate electron acceptor for the enzyme is believed to be ubiquinone. This is NADH dehydrogenase [ubiquinone] iron-sulfur protein 5 (NDUFS5) from Homo sapiens (Human).